The chain runs to 235 residues: Segregation and condensation protein A (235 aa).

This sequence belongs to the ScpA family. As to quaternary structure, component of a cohesin-like complex composed of ScpA, ScpB and the Smc homodimer, in which ScpA and ScpB bind to the head domain of Smc. The presence of the three proteins is required for the association of the complex with DNA.

Its subcellular location is the cytoplasm. Its function is as follows. Participates in chromosomal partition during cell division. May act via the formation of a condensin-like complex containing Smc and ScpB that pull DNA away from mid-cell into both cell halves. The chain is Segregation and condensation protein A from Streptococcus mutans serotype c (strain ATCC 700610 / UA159).